We begin with the raw amino-acid sequence, 334 residues long: Heat-inducible transcription repressor HrcA (334 aa).

Belongs to the HrcA family.

Negative regulator of class I heat shock genes (grpE-dnaK-dnaJ and groELS operons). Prevents heat-shock induction of these operons. This Bordetella bronchiseptica (strain ATCC BAA-588 / NCTC 13252 / RB50) (Alcaligenes bronchisepticus) protein is Heat-inducible transcription repressor HrcA.